Here is a 207-residue protein sequence, read N- to C-terminus: GTP cyclohydrolase-2 (207 aa).

Residue 49–53 (RTHSE) coordinates GTP. The Zn(2+) site is built by Cys54, Cys65, and Cys67. GTP-binding positions include Gln70, 92-94 (EGR), and Thr114. Residue Asp126 is the Proton acceptor of the active site. Arg128 serves as the catalytic Nucleophile. GTP-binding residues include Thr149 and Lys154.

The protein belongs to the GTP cyclohydrolase II family. The cofactor is Zn(2+).

It carries out the reaction GTP + 4 H2O = 2,5-diamino-6-hydroxy-4-(5-phosphoribosylamino)-pyrimidine + formate + 2 phosphate + 3 H(+). The protein operates within cofactor biosynthesis; riboflavin biosynthesis; 5-amino-6-(D-ribitylamino)uracil from GTP: step 1/4. Its function is as follows. Catalyzes the conversion of GTP to 2,5-diamino-6-ribosylamino-4(3H)-pyrimidinone 5'-phosphate (DARP), formate and pyrophosphate. In Hahella chejuensis (strain KCTC 2396), this protein is GTP cyclohydrolase-2.